Reading from the N-terminus, the 608-residue chain is Glutamine--fructose-6-phosphate aminotransferase [isomerizing] (608 aa).

Cys2 serves as the catalytic Nucleophile; for GATase activity. In terms of domain architecture, Glutamine amidotransferase type-2 spans 2–217; sequence CGIVGIVGNQ…DGDWAVIGKT (216 aa). 2 SIS domains span residues 281–422 and 456–598; these read ISDA…ARGT and LSRE…VDQP. Lys603 functions as the For Fru-6P isomerization activity in the catalytic mechanism.

In terms of assembly, homodimer.

Its subcellular location is the cytoplasm. The enzyme catalyses D-fructose 6-phosphate + L-glutamine = D-glucosamine 6-phosphate + L-glutamate. Functionally, catalyzes the first step in hexosamine metabolism, converting fructose-6P into glucosamine-6P using glutamine as a nitrogen source. The protein is Glutamine--fructose-6-phosphate aminotransferase [isomerizing] of Rhizobium meliloti (strain 1021) (Ensifer meliloti).